The following is a 101-amino-acid chain: Protein translation factor SUI1 homolog (101 aa).

Belongs to the SUI1 family.

This Methanosphaera stadtmanae (strain ATCC 43021 / DSM 3091 / JCM 11832 / MCB-3) protein is Protein translation factor SUI1 homolog.